Consider the following 154-residue polypeptide: Protein X (154 aa).

The tract at residues 68–117 (PCALRFTSARRMETTVNAHWNLPKVLHKRTLGLSAMSTTDLEAYFKDCVF) is mitochondrial targeting sequence.

Belongs to the orthohepadnavirus protein X family. As to quaternary structure, may form homodimer. May interact with host CEBPA, CFLAR, CREB1, DDB1, E4F1, HBXIP, HSPD1/HSP60, NFKBIA, POLR2E and SMAD4. Interacts with host SMC5-SMC6 complex and induces its degradation. Interacts with host TRPC4AP; leading to prevent ubiquitination of TRPC4AP. Interacts with host PLSCR1; this interaction promotes ubiquitination and degradation of HBx and impairs HBx-mediated cell proliferation. In terms of processing, a fraction may be phosphorylated in insect cells and HepG2 cells, a human hepatoblastoma cell line. Phosphorylated in vitro by host protein kinase C or mitogen-activated protein kinase. N-acetylated in insect cells.

Its subcellular location is the host cytoplasm. The protein localises to the host nucleus. The protein resides in the host mitochondrion. In terms of biological role, multifunctional protein that plays a role in silencing host antiviral defenses and promoting viral transcription. Does not seem to be essential for HBV infection. May be directly involved in development of cirrhosis and liver cancer (hepatocellular carcinoma). Most of cytosolic activities involve modulation of cytosolic calcium. The effect on apoptosis is controversial depending on the cell types in which the studies have been conducted. May induce apoptosis by localizing in mitochondria and causing loss of mitochondrial membrane potential. May also modulate apoptosis by binding host CFLAR, a key regulator of the death-inducing signaling complex (DISC). Promotes viral transcription by using the host E3 ubiquitin ligase DDB1 to target the SMC5-SMC6 complex to proteasomal degradation. This host complex would otherwise bind to viral episomal DNA, and prevents its transcription. Moderately stimulates transcription of many different viral and cellular transcription elements. Promoters and enhancers stimulated by HBx contain DNA binding sites for NF-kappa-B, AP-1, AP-2, c-EBP, ATF/CREB, or the calcium-activated factor NF-AT. The protein is Protein X of Hepatitis B virus genotype B2 (isolate Vietnam/9873/1997) (HBV-B).